We begin with the raw amino-acid sequence, 244 residues long: Transcriptional regulatory protein YpdB (244 aa).

A Response regulatory domain is found at lysine 2–glutamate 116. A 4-aspartylphosphate modification is found at aspartate 53. The HTH LytTR-type domain occupies isoleucine 139 to leucine 244.

Post-translationally, phosphorylated by YpdA.

It is found in the cytoplasm. Its function is as follows. Member of the two-component regulatory system YpdA/YpdB. YpdB regulates expression of yhjX by binding to its promoter region. The protein is Transcriptional regulatory protein YpdB (ypdB) of Escherichia coli O157:H7.